The sequence spans 222 residues: Protein-L-isoaspartate O-methyltransferase (222 aa).

Ser-69 is an active-site residue.

Belongs to the methyltransferase superfamily. L-isoaspartyl/D-aspartyl protein methyltransferase family.

It localises to the cytoplasm. The catalysed reaction is [protein]-L-isoaspartate + S-adenosyl-L-methionine = [protein]-L-isoaspartate alpha-methyl ester + S-adenosyl-L-homocysteine. Functionally, catalyzes the methyl esterification of L-isoaspartyl residues in peptides and proteins that result from spontaneous decomposition of normal L-aspartyl and L-asparaginyl residues. It plays a role in the repair and/or degradation of damaged proteins. The sequence is that of Protein-L-isoaspartate O-methyltransferase from Caulobacter vibrioides (strain NA1000 / CB15N) (Caulobacter crescentus).